The sequence spans 307 residues: Ras-related protein Rab-33 (307 aa).

A disordered region spans residues 19 to 80 (VIDPPKHVTA…IPPAPEAVTA (62 aa)). 2 stretches are compositionally biased toward pro residues: residues 42-56 (PTHP…PAVP) and 65-75 (PTAPPPIPPAP). GTP is bound at residue 107 to 114 (GNAAVGKT). The short motif at 129-137 (TEATIGVDF) is the Effector region element. Residues 155–159 (DTAGQ) and 217–220 (NKCD) contribute to the GTP site. 2 S-geranylgeranyl cysteine lipidation sites follow: Cys-306 and Cys-307.

This sequence belongs to the small GTPase superfamily. Rab family.

The protein localises to the cell membrane. In Caenorhabditis elegans, this protein is Ras-related protein Rab-33 (rab-33).